Consider the following 82-residue polypeptide: Cytochrome b559 subunit alpha (82 aa).

Residues 22–36 (IIHAVTLPAIFIAGF) form a helical membrane-spanning segment. His-24 is a heme binding site.

Belongs to the PsbE/PsbF family. In terms of assembly, heterodimer of an alpha subunit and a beta subunit. PSII is composed of 1 copy each of membrane proteins PsbA, PsbB, PsbC, PsbD, PsbE, PsbF, PsbH, PsbI, PsbJ, PsbK, PsbL, PsbM, PsbT, PsbX, PsbY, Psb30/Ycf12, peripheral proteins PsbO, CyanoQ (PsbQ), PsbU, PsbV and a large number of cofactors. It forms dimeric complexes. Requires heme b as cofactor.

Its subcellular location is the cellular thylakoid membrane. Its function is as follows. This b-type cytochrome is tightly associated with the reaction center of photosystem II (PSII). PSII is a light-driven water:plastoquinone oxidoreductase that uses light energy to abstract electrons from H(2)O, generating O(2) and a proton gradient subsequently used for ATP formation. It consists of a core antenna complex that captures photons, and an electron transfer chain that converts photonic excitation into a charge separation. This is Cytochrome b559 subunit alpha from Prochlorococcus marinus (strain MIT 9211).